The chain runs to 248 residues: UPF0246 protein RC0754 (248 aa).

Belongs to the UPF0246 family.

This chain is UPF0246 protein RC0754, found in Rickettsia conorii (strain ATCC VR-613 / Malish 7).